The following is a 465-amino-acid chain: Ribulose bisphosphate carboxylase large chain (465 aa).

Lysine 4 carries the N6,N6,N6-trimethyllysine modification. Residues asparagine 113 and threonine 163 each coordinate substrate. Lysine 165 serves as the catalytic Proton acceptor. Lysine 167 is a substrate binding site. Lysine 191, aspartate 193, and glutamate 194 together coordinate Mg(2+). Lysine 191 bears the N6-carboxylysine mark. The active-site Proton acceptor is the histidine 284. Arginine 285, histidine 317, and serine 369 together coordinate substrate.

This sequence belongs to the RuBisCO large chain family. Type I subfamily. Heterohexadecamer of 8 large chains and 8 small chains; disulfide-linked. The disulfide link is formed within the large subunit homodimers. Mg(2+) serves as cofactor. Post-translationally, the disulfide bond which can form in the large chain dimeric partners within the hexadecamer appears to be associated with oxidative stress and protein turnover.

It is found in the plastid. The protein localises to the chloroplast. It catalyses the reaction 2 (2R)-3-phosphoglycerate + 2 H(+) = D-ribulose 1,5-bisphosphate + CO2 + H2O. It carries out the reaction D-ribulose 1,5-bisphosphate + O2 = 2-phosphoglycolate + (2R)-3-phosphoglycerate + 2 H(+). Its function is as follows. RuBisCO catalyzes two reactions: the carboxylation of D-ribulose 1,5-bisphosphate, the primary event in carbon dioxide fixation, as well as the oxidative fragmentation of the pentose substrate in the photorespiration process. Both reactions occur simultaneously and in competition at the same active site. The chain is Ribulose bisphosphate carboxylase large chain from Senega cruciata (Cross-leaved milkwort).